A 490-amino-acid polypeptide reads, in one-letter code: Inosine-5'-monophosphate dehydrogenase (490 aa).

CBS domains follow at residues 96–154 (MIIN…SKPV) and 158–218 (MTKE…CKDE). Residues Asp-252 and 302-304 (GVG) contribute to the NAD(+) site. 2 residues coordinate K(+): Gly-304 and Gly-306. Ser-307 lines the IMP pocket. Cys-309 serves as a coordination point for K(+). Cys-309 acts as the Thioimidate intermediate in catalysis. Residues 342-344 (DGG), 365-366 (GN), and 389-393 (YRGMG) each bind IMP. Arg-406 (proton acceptor) is an active-site residue. Glu-418 lines the IMP pocket. Glu-472, Ser-473, and His-474 together coordinate K(+).

The protein belongs to the IMPDH/GMPR family. In terms of assembly, homotetramer. The cofactor is K(+).

It catalyses the reaction IMP + NAD(+) + H2O = XMP + NADH + H(+). It functions in the pathway purine metabolism; XMP biosynthesis via de novo pathway; XMP from IMP: step 1/1. Mycophenolic acid (MPA) is a non-competitive inhibitor that prevents formation of the closed enzyme conformation by binding to the same site as the amobile flap. In contrast, mizoribine monophosphate (MZP) is a competitive inhibitor that induces the closed conformation. MPA is a potent inhibitor of mammalian IMPDHs but a poor inhibitor of the bacterial enzymes. MZP is a more potent inhibitor of bacterial IMPDH. Its function is as follows. Catalyzes the conversion of inosine 5'-phosphate (IMP) to xanthosine 5'-phosphate (XMP), the first committed and rate-limiting step in the de novo synthesis of guanine nucleotides, and therefore plays an important role in the regulation of cell growth. This is Inosine-5'-monophosphate dehydrogenase from Aquifex aeolicus (strain VF5).